Here is a 191-residue protein sequence, read N- to C-terminus: ATP-dependent Clp protease proteolytic subunit 1 (191 aa).

Serine 91 functions as the Nucleophile in the catalytic mechanism. Histidine 116 is an active-site residue.

Belongs to the peptidase S14 family. In terms of assembly, fourteen ClpP subunits assemble into 2 heptameric rings which stack back to back to give a disk-like structure with a central cavity, resembling the structure of eukaryotic proteasomes.

The protein localises to the cytoplasm. The catalysed reaction is Hydrolysis of proteins to small peptides in the presence of ATP and magnesium. alpha-casein is the usual test substrate. In the absence of ATP, only oligopeptides shorter than five residues are hydrolyzed (such as succinyl-Leu-Tyr-|-NHMec, and Leu-Tyr-Leu-|-Tyr-Trp, in which cleavage of the -Tyr-|-Leu- and -Tyr-|-Trp bonds also occurs).. In terms of biological role, cleaves peptides in various proteins in a process that requires ATP hydrolysis. Has a chymotrypsin-like activity. Plays a major role in the degradation of misfolded proteins. This is ATP-dependent Clp protease proteolytic subunit 1 from Chlamydia pneumoniae (Chlamydophila pneumoniae).